The primary structure comprises 296 residues: MAWIQIRLNSTNEKAEQMSDFLEEIGSVSVTFMDSQDTPIFEPLPGETRLWGNTDVIALFDAETDMAEIVRLLKEAKHLDSNTAYKIGTNRRLKNWEREWMDNFHPMQFGKRLWICPSWRDVPDENAVNVMLDPGLAFGTGTHPTTALCLEWLDGLDLKDKSVIDFGCGSGILAIAALKLGAKSAVGIDIDPQAILASRNNAEQNGVTDRLQLFLSDEKPSDLKADVVVANILAGPLKELYPIISQLVKPNGDLGLSGILETQAQSVCDTYTQTFALEPVAAREEWCRITGKLKTL.

Positions 146, 167, 189, and 231 each coordinate S-adenosyl-L-methionine.

It belongs to the methyltransferase superfamily. PrmA family.

Its subcellular location is the cytoplasm. The catalysed reaction is L-lysyl-[protein] + 3 S-adenosyl-L-methionine = N(6),N(6),N(6)-trimethyl-L-lysyl-[protein] + 3 S-adenosyl-L-homocysteine + 3 H(+). In terms of biological role, methylates ribosomal protein L11. The sequence is that of Ribosomal protein L11 methyltransferase from Haemophilus influenzae (strain ATCC 51907 / DSM 11121 / KW20 / Rd).